Consider the following 163-residue polypeptide: Putative 4-hydroxy-4-methyl-2-oxoglutarate aldolase (163 aa).

Residues 76–79 (GDML) and Arg98 contribute to the substrate site. Asp99 contributes to the a divalent metal cation binding site.

Belongs to the class II aldolase/RraA-like family. As to quaternary structure, homotrimer. A divalent metal cation is required as a cofactor.

It catalyses the reaction 4-hydroxy-4-methyl-2-oxoglutarate = 2 pyruvate. It carries out the reaction oxaloacetate + H(+) = pyruvate + CO2. Catalyzes the aldol cleavage of 4-hydroxy-4-methyl-2-oxoglutarate (HMG) into 2 molecules of pyruvate. Also contains a secondary oxaloacetate (OAA) decarboxylase activity due to the common pyruvate enolate transition state formed following C-C bond cleavage in the retro-aldol and decarboxylation reactions. The polypeptide is Putative 4-hydroxy-4-methyl-2-oxoglutarate aldolase (Pseudomonas putida (strain ATCC 47054 / DSM 6125 / CFBP 8728 / NCIMB 11950 / KT2440)).